Reading from the N-terminus, the 429-residue chain is ETS domain-containing protein Elk-1 (429 aa).

Residues 5 to 86 (VTLWQFLLQL…SGQKFVYKFV (82 aa)) constitute a DNA-binding region (ETS). 3 disordered regions span residues 119-146 (HAGP…GLAR), 165-204 (SLQP…SPNP), and 227-253 (APNQ…KVEG). The segment covering 169–178 (QPQPPIPPRP) has biased composition (pro residues). Residues Lys-231, Lys-250, and Lys-255 each participate in a glycyl lysine isopeptide (Lys-Gly) (interchain with G-Cter in SUMO) cross-link. The span at 302–312 (STSTTEITQPQ) shows a compositional bias: polar residues. Residues 302-354 (STSTTEITQPQKGRKPRDLELPLSPSLLGGQGPERTPGSGTSSGLQAPGPALT) are disordered. Residue Ser-325 is modified to Phosphoserine; by MAPK1. Thr-337, Thr-354, Thr-364, and Thr-369 each carry phosphothreonine; by MAPK1. Residues 350 to 400 (GPALTPSLLPTHTLTPVLLTPSSLPPSIHFWSTLSPIAPRSPAKLSFQFPS) form a sufficient for interaction with MAD2L2 region. Thr-382 carries an O-linked (GlcNAc) threonine glycan. Residue Ser-384 is modified to Phosphoserine; by MAPK1 and MAPK8. Ser-390 carries the phosphoserine; by MAPK1 modification. Position 418 is a phosphothreonine; by MAPK1 (Thr-418). At Ser-423 the chain carries Phosphoserine; by MAPK1.

Belongs to the ETS family. Interacts in its sumoylated form with PIAS2/PIASX which enhances its transcriptional activator activity. Interacts with MAD2L2; the interaction is direct and promotes phosphorylation by the kinases MAPK8 and/or MAPK9. Interacts with POU1F1. In terms of processing, sumoylation represses transcriptional activator activity as it results in recruitment of HDAC2 to target gene promoters which leads to decreased histone acetylation and reduced transactivator activity. It also regulates nuclear retention. On mitogenic stimulation, phosphorylated on C-terminal serine and threonine residues by MAPK1 but also MAPK8 and/or MAPK9. Phosphorylation leads to loss of sumoylation and restores transcriptional activator activity. Phosphorylated and activated by CaMK4, MAPK11, MAPK12 and MAPK14. Upon bFGF stimulus, phosphorylated by PAK1. Phosphorylated by PRP4K at Thr-418; phosphorylation activation ELK1 transcriptional activity. Predominantly expressed in the brain, and to a lesser extent in the heart, liver and muscle.

It is found in the nucleus. Its function is as follows. Transcription factor that binds to purine-rich DNA sequences. Forms a ternary complex with SRF and the ETS and SRF motifs of the serum response element (SRE) on the promoter region of immediate early genes such as FOS and IER2. Induces target gene transcription upon JNK and MAPK-signaling pathways stimulation. The protein is ETS domain-containing protein Elk-1 of Mus musculus (Mouse).